A 138-amino-acid polypeptide reads, in one-letter code: Large ribosomal subunit protein bL17 (138 aa).

The protein belongs to the bacterial ribosomal protein bL17 family. As to quaternary structure, part of the 50S ribosomal subunit. Contacts protein L32.

This Dinoroseobacter shibae (strain DSM 16493 / NCIMB 14021 / DFL 12) protein is Large ribosomal subunit protein bL17.